A 248-amino-acid chain; its full sequence is Small ribosomal subunit protein eS1 (248 aa).

Positions 1–21 (MAVGKDKRISKGKKGGKKKIV) are disordered.

Belongs to the eukaryotic ribosomal protein eS1 family. Component of the small ribosomal subunit. Mature ribosomes consist of a small (40S) and a large (60S) subunit. The 40S subunit contains about 33 different proteins and 1 molecule of RNA (18S). The 60S subunit contains about 49 different proteins and 3 molecules of RNA (25S, 5.8S and 5S).

It is found in the cytoplasm. The sequence is that of Small ribosomal subunit protein eS1 from Syntrichia ruralis (Great hairy screw-moss).